We begin with the raw amino-acid sequence, 572 residues long: Potassium-transporting ATPase potassium-binding subunit (572 aa).

10 helical membrane-spanning segments follow: residues 6-26 (ILFVVFIFTLVIITKPLGTYI), 66-86 (FFSLLSFSIMAFIFVFVVLLL), 135-155 (ALAVQNFVSAAVGLCVAIVLI), 177-197 (IFWILLPISIIIAIVYIFQGV), 251-271 (TIITNYIQMVSIFAIAAALTY), 283-303 (GWMIFAVMLVLFVISLMVMTI), 382-402 (IFGGIGAGFYGFFMFLMLAVF), 428-448 (MFALLISPCCVLVFTGLAAVI), 493-513 (ITIALSMLIGRFGVIFAVMML), and 537-557 (FIFSVLVFFTIVLIGGLTIFP).

This sequence belongs to the KdpA family. In terms of assembly, the system is composed of three essential subunits: KdpA, KdpB and KdpC.

It localises to the cell inner membrane. Part of the high-affinity ATP-driven potassium transport (or Kdp) system, which catalyzes the hydrolysis of ATP coupled with the electrogenic transport of potassium into the cytoplasm. This subunit binds the periplasmic potassium ions and delivers the ions to the membrane domain of KdpB through an intramembrane tunnel. This Francisella philomiragia subsp. philomiragia (strain ATCC 25017 / CCUG 19701 / FSC 153 / O#319-036) protein is Potassium-transporting ATPase potassium-binding subunit.